Reading from the N-terminus, the 157-residue chain is Myosin essential light chain, striated adductor muscle (157 aa).

EF-hand domains follow at residues 7-44 (DEID…LGIN) and 82-117 (GTFA…LGER).

In molluscan muscle, calcium regulation is associated with myosin rather than with actin. Muscle myosin contains two types of light chains: the catalytic light chain, essential for ATPase activity, and the regulatory light chain, a calcium-binding protein responsible for Ca(2+) dependent binding and Ca(2+) dependent Mg-ATPase activity. The protein is Myosin essential light chain, striated adductor muscle of Argopecten irradians (Bay scallop).